Here is a 104-residue protein sequence, read N- to C-terminus: Large ribosomal subunit protein bL21 (104 aa).

Belongs to the bacterial ribosomal protein bL21 family. Part of the 50S ribosomal subunit. Contacts protein L20.

In terms of biological role, this protein binds to 23S rRNA in the presence of protein L20. The sequence is that of Large ribosomal subunit protein bL21 from Helicobacter pylori (strain Shi470).